A 263-amino-acid chain; its full sequence is Ribosomal RNA small subunit methyltransferase A (263 aa).

Residues asparagine 20, leucine 22, glycine 47, glutamate 68, aspartate 90, and asparagine 110 each coordinate S-adenosyl-L-methionine.

The protein belongs to the class I-like SAM-binding methyltransferase superfamily. rRNA adenine N(6)-methyltransferase family. RsmA subfamily.

Its subcellular location is the cytoplasm. The enzyme catalyses adenosine(1518)/adenosine(1519) in 16S rRNA + 4 S-adenosyl-L-methionine = N(6)-dimethyladenosine(1518)/N(6)-dimethyladenosine(1519) in 16S rRNA + 4 S-adenosyl-L-homocysteine + 4 H(+). Functionally, specifically dimethylates two adjacent adenosines (A1518 and A1519) in the loop of a conserved hairpin near the 3'-end of 16S rRNA in the 30S particle. May play a critical role in biogenesis of 30S subunits. This chain is Ribosomal RNA small subunit methyltransferase A, found in Chlorobium limicola (strain DSM 245 / NBRC 103803 / 6330).